The primary structure comprises 215 residues: Myelin protein zero-like protein 2 (215 aa).

Positions 1–26 (MYGKSPTRAVLFLLGLQLTALWPTAA) are cleaved as a signal peptide. In terms of domain architecture, Ig-like V-type spans 27–141 (VEIYTPRVLE…DGLIGEIQLS (115 aa)). Over 27–154 (VEIYTPRVLE…TVRFSEIHFL (128 aa)) the chain is Extracellular. 2 N-linked (GlcNAc...) asparagine glycosylation sites follow: N39 and N118. A disulfide bridge links C47 with C123. The helical transmembrane segment at 155–175 (ALAIGSACALMVIIVIVVVLF) threads the bilayer. The Cytoplasmic portion of the chain corresponds to 176 to 215 (QHFRKKRRAERAHRVVEIKSKEEEKLNQEKKASVSLEYTD).

It belongs to the myelin P0 protein family.

It is found in the membrane. Its function is as follows. Mediates homophilic cell-cell adhesion. This is Myelin protein zero-like protein 2 (MPZL2) from Bos taurus (Bovine).